Here is a 465-residue protein sequence, read N- to C-terminus: Poly(A) polymerase I (465 aa).

Residues Asp80, Asp82, and Asp162 contribute to the active site. The segment at 430–465 (APPEQKGMLNELDDDPAPRRRRSRPRKRAPRREGTV) is disordered. The span at 448-459 (RRRRSRPRKRAP) shows a compositional bias: basic residues.

The protein belongs to the tRNA nucleotidyltransferase/poly(A) polymerase family.

It carries out the reaction RNA(n) + ATP = RNA(n)-3'-adenine ribonucleotide + diphosphate. In terms of biological role, adds poly(A) tail to the 3' end of many RNAs, which usually targets these RNAs for decay. Plays a significant role in the global control of gene expression, through influencing the rate of transcript degradation, and in the general RNA quality control. The polypeptide is Poly(A) polymerase I (Salmonella typhi).